Consider the following 195-residue polypeptide: Large ribosomal subunit protein uL5 (195 aa).

The disordered stretch occupies residues methionine 1–asparagine 25.

Belongs to the universal ribosomal protein uL5 family. Component of the large ribosomal subunit.

It localises to the nucleus. Its subcellular location is the cytoplasm. Functionally, component of the ribosome, a large ribonucleoprotein complex responsible for the synthesis of proteins in the cell. The small ribosomal subunit (SSU) binds messenger RNAs (mRNAs) and translates the encoded message by selecting cognate aminoacyl-transfer RNA (tRNA) molecules. The large subunit (LSU) contains the ribosomal catalytic site termed the peptidyl transferase center (PTC), which catalyzes the formation of peptide bonds, thereby polymerizing the amino acids delivered by tRNAs into a polypeptide chain. The nascent polypeptides leave the ribosome through a tunnel in the LSU and interact with protein factors that function in enzymatic processing, targeting, and the membrane insertion of nascent chains at the exit of the ribosomal tunnel. The polypeptide is Large ribosomal subunit protein uL5 (RpL11) (Spodoptera frugiperda (Fall armyworm)).